Consider the following 172-residue polypeptide: 5'(3')-deoxyribonucleotidase (172 aa).

Aspartate 8 acts as the Nucleophile in catalysis. The Mg(2+) site is built by aspartate 8, aspartate 10, and aspartate 132. Residue aspartate 10 is the Proton donor of the active site.

This sequence belongs to the 5'(3')-deoxyribonucleotidase family. Requires Mg(2+) as cofactor.

Its function is as follows. Dephosphorylates nucleoside monophosphates such as the 5' and 2'(3')-phosphates of deoxyribonucleotides in vitro. Also catalyzes the dephosphorylation of coenzyme A (CoA), pyridoxal-5'-phosphate (PLP), riboflavine-5-phosphate (FMN) and nicotinamide adenine dinucleotide phosphate (NADP) in vitro. This is 5'(3')-deoxyribonucleotidase (yorS) from Bacillus subtilis (strain 168).